Here is a 387-residue protein sequence, read N- to C-terminus: Alkanesulfonate monooxygenase (387 aa).

Belongs to the SsuD family.

The catalysed reaction is an alkanesulfonate + FMNH2 + O2 = an aldehyde + FMN + sulfite + H2O + 2 H(+). Its function is as follows. Catalyzes the desulfonation of aliphatic sulfonates. This chain is Alkanesulfonate monooxygenase, found in Cupriavidus metallidurans (strain ATCC 43123 / DSM 2839 / NBRC 102507 / CH34) (Ralstonia metallidurans).